Here is a 469-residue protein sequence, read N- to C-terminus: Glutamate--tRNA ligase 1 (469 aa).

Residues 10-20 (PSPTGYLHIGG) carry the 'HIGH' region motif. Positions 99, 101, 126, and 128 each coordinate Zn(2+). Residues 237-241 (RLSKR) carry the 'KMSKS' region motif. ATP is bound at residue Lys240.

Belongs to the class-I aminoacyl-tRNA synthetase family. Glutamate--tRNA ligase type 1 subfamily. As to quaternary structure, monomer. Requires Zn(2+) as cofactor.

It is found in the cytoplasm. It carries out the reaction tRNA(Glu) + L-glutamate + ATP = L-glutamyl-tRNA(Glu) + AMP + diphosphate. In terms of biological role, catalyzes the attachment of glutamate to tRNA(Glu) in a two-step reaction: glutamate is first activated by ATP to form Glu-AMP and then transferred to the acceptor end of tRNA(Glu). This is Glutamate--tRNA ligase 1 from Coxiella burnetii (strain RSA 331 / Henzerling II).